A 3108-amino-acid chain; its full sequence is MTENIDKNDDDVAVIGIGLRFPSGNLKESISKPNQLFNELLNGLDGIVTTSERWSDNYYLNGEVVSKFAGLLPLDEWKQFDPIFFAINPSYDNVSSIDPQQRLLLKCVWEALEDSGIDPISLRGTNTSTFIGSSTIDYNDLQKSPFETQNNIFGSTTHSIANRIGFSFDFRGENLTIDTACSSSSNAINCGYNSIKSNKSNVSIVGGVNFILNPYISKSFTQLDMLSPTGKCHTFSSDADGFVRSEGVGIVVLKKLKDAIKDSNNIYCVIKGSSSNIDGNFDKLNFYSPSKLSQCENIKLAIKSTNGQINESDIDYCETHGTGTPTGDPIELEGISRAFNNKASTTNNNKQVLVGSFKSNIGHTEACSGVASLIKCCLMFKNKLFLQNINFKEPNPLINFKEWGLKVVTEPIKFNENKPTVMLINNFGITGSNVCLILSEFSGNSKSNDYQKMEIDNKFNEKKKYLIPLSSNSSTSLNNYKLSIIKHLNSRSSSSSTTTSFEEFVYNQIKFKSTSLIQKSVIIASDWNEFQDENNQIKLENSDNLISNITVEKKKSPIIVMVLCGQGSQYNKMALSLYDNEPIFREYVNRFDKELFKYYGYSVLDKLRSIEDKDLISIHQPILAQPATVIIQVSLYELYKHWGVSADIIIGHSLGEISSAYCSGMIDFQTLCYLTYHRSVAQNRTTGTGKMLSVNISSDEFINSYQSTTKYESLEIACYNSPTSIVIAGKEDLLNEIIKDFKSNDIFCAMLGSLSSFHTSSQQMIKDEVCSLNISSKQPSIAIFSTVTTNLFNHQSSPFDADYVFDNIRQPVRFTQTITNLYKYAESNDMGNEITFIEVSPHPTLQFYLNQMNSTQSSYFNSGKNITIYSPLNKKKNDYNEFLKTISLLYVNNNLNINFKSQLINNNNNNNNNNYTNLFNNLPLYQWDDKEYFKITSFHEKIKSEGPSIHSLGNNTDSPYPSYQTFIDIKKSPFQWLKGHQVSDKFYYPGMGHVHNLLSIYPNQDITISSLEFKSPLVLAEGNRQCLQTSVTPLSKNEFNIKSHYKDQKTNQWILTSLGNFSLFKHNIIENNQPINIQTLKDKCNFTSISKQDLYETIRIKTNLTYKGLFQGVKQCHIGNNCSLAIVSLNEIYIQKEYNHLINNSNMNTLFNTAILDTCLHGVLCAVTQPVVLDRIEGFNFYSSNIPSSLNYRNNNNNNNNINNNNNNNNNSNNTINEFYVYSEIRARTNFQTYSGSIKIILPNGTLLVDIGNVVCTIAASNPDSSLICKPNYIYTPHLQSKDSIINKPEQFKHLHRVNEFSFKNEENLFISNRLLLSLFYKHINNRCPSINLESLETLEYDQFKQLYYNSLVNENLFKFIFEILKKYQNIPNINNNNNNNNNNNNNNNNNNNNNNNNNNNNNNNNNNNNNNNNNNNNNNNNNNNNNNNNNNNNNEKLYIKTTKIMAKQLFPLKDDDSITDTPQSLFESGYLDVFYKNSIVVQPLNSLLSEIIVETLKPILNEPIVFRILEAGGGTGSLSLLILEKICKLLNENNSTTSIIDIEFTWSDISASFFAEIKEKFSSFTNHNSLNIIYRVLDLDKPLLDQDLKASYYDFVVMSNVMHVVKKLKPTLNEIHNILAPNGQLLFVEPPYKSFFIDSIFGCFSQWWPSSDSDIELRPDRCCMKQEKWINLLNQCNYRDTIMSGNDNLLFLVQTRKPTINEIISEQSISLDQLKSFNNIILFSSNNKNNKNDSFSIIQNLITLNQELKHKIININNYNEFQSWITNNQNIDNKTLIIFLKSIDSTVNTSNFKETTFEYIQINQLILKLELSNNFKHLLLSLNSTTDNYLTSSIVGAARYFIEFPQLDLLTLNYDNVSIENNQQLLSLINYLINSNNNIQKEFTINNNIVYYERFCKRLNNIKSKFQSKSFETNKDNLYIQLNSNLEYQLYSKKDELNSNEVEIEIKATGINYKDYLLHIGMIGTNLEIKYGKEIENGIGFDNPKIGNDFSGIITRLGCNVKEFKVGDQVCGFGSKTNSSHIIVDSDSIYYKPLYYSHSVSASIPSIYITSLHSIYGIGNLKSNESILIHSAAGGVGLSSLDLLKSKQHQGYIFLTVGSKDKEEYLINKYGSLITAIYSSRNKNYVYEIKNKLIELGEVEQHQQGVDLILNTLSSEFMSPNFQCLNLSGRIVDLSITHLTPNDYMTNSHYKFNMGYNNVNVEDFPGKLIKSYLKKIIEMINSNELELSVPIIEYSNNQFKDAIEYINQRKHIGKIIVNHSQDEFNRVYNNYQNNNNQIIMKHSYDISKLNIGKNIILTGQTGIVLEILKYLVKYSNHSIENIIILSKSKLKWELELLINQTKFKKDNIIKFHFNQIDIEDSNKVNQALNQLELNENITNIDSIIHFAFMNDIGDVQQVDMNRLNNAHGAKTIGAINLHNQSINRSWNIKQFIMASSVASIVGSEQQCCYVSACNVIDSLSKYRHSIGLPSLAINLGTISSTGFITRNNTIETMLKSSILNFLSPQLVISSLDLFIQNQHQYPNYCMSDFKFKIIPSTNQYFSKFDFEINIVKKSNQIKSFFGGDGNNEIIHSTILNKISELLSIDKSKINEDLQLTQYGTDSLVIVQLKNFIDNQLGHNIITIQQLQNNKINQSIEIIKSALNKNNNIYNNKKNNNNNLVKKEQQSLDEFIKNETKLNESIISRPYSIKKILNNNNNSKSIFLTGSTGFLGAYLLMELIKMNNISKIYCLIRNNSKLTNPIDVIINNLKKHQLIDMNKESPKRKTKIINHTGNISNDKLNSSDNSNNNNNQINEDQLIKIIPMIGDISKDKFGLTEQDYLKLSNECDIIINSAADLNLKSNYEESKTINVNNVNQVIKLSVSNNSSQKLIVHFSSLAVFINHPFKDEEDFEETNIVPNFNSTPIGYIQSKVISEKLLTNAAESRGIPSIIIRPPDIFSNPITGIGHSNDFLSLLIKASKDIGYYPNIHKSIFSTPVTTIAKTTIDLIFNENSWNQNKSKPISIYNFNGNSMEFKSFYRVLENNFKCKEIDFDEWIELVSKSNGKSSKRYSTFHIHKNQNLLLTTFTINSLFKMSNSTKELLISIGSYNHQDWEINESMILNDIINNH.

Positions 9–440 constitute a Ketosynthase family 3 (KS3) domain; the sequence is DDDVAVIGIG…GSNVCLILSE (432 aa). Active-site for beta-ketoacyl synthase activity residues include C181, H320, and H363. The acyl/malonyl transferase stretch occupies residues 643–676; it reads GVSADIIIGHSLGEISSAYCSGMIDFQTLCYLTY. Residue S653 is the For acyl/malonyl transferase activity of the active site. An N-terminal hotdog fold region spans residues 939-1068; it reads HEKIKSEGPS…GNFSLFKHNI (130 aa). One can recognise a PKS/mFAS DH domain in the interval 939-1265; that stretch reads HEKIKSEGPS…CTIAASNPDS (327 aa). H980 serves as the catalytic Proton acceptor; for dehydratase activity. The C-terminal hotdog fold stretch occupies residues 1085-1265; it reads NFTSISKQDL…CTIAASNPDS (181 aa). Catalysis depends on D1157, which acts as the Proton donor; for dehydratase activity. A disordered region spans residues 1375–1435; sequence NNNNNNNNNN…NNNNNNNNNN (61 aa). A Carrier domain is found at 2566-2643; that stretch reads GNNEIIHSTI…QSIEIIKSAL (78 aa). Residue S2603 is modified to O-(pantetheine 4'-phosphoryl)serine. Residues 2702–2722 form a helical membrane-spanning segment; the sequence is IFLTGSTGFLGAYLLMELIKM.

It depends on pantetheine 4'-phosphate as a cofactor.

It localises to the membrane. In terms of biological role, probable polyketide synthase. The chain is Probable polyketide synthase 39 (pks39) from Dictyostelium discoideum (Social amoeba).